The following is a 324-amino-acid chain: Tubulin alpha-8 chain (324 aa).

Ser-15, Gly-19, Thr-20, Thr-54, Asn-81, and Asn-103 together coordinate GTP. Glu-129 is an active-site residue.

It belongs to the tubulin family. In terms of assembly, dimer of alpha and beta chains. A typical microtubule is a hollow water-filled tube with an outer diameter of 25 nm and an inner diameter of 15 nM. Alpha-beta heterodimers associate head-to-tail to form protofilaments running lengthwise along the microtubule wall with the beta-tubulin subunit facing the microtubule plus end conferring a structural polarity. Microtubules usually have 13 protofilaments but different protofilament numbers can be found in some organisms and specialized cells. Requires Mg(2+) as cofactor. Some glutamate residues at the C-terminus are polyglycylated, resulting in polyglycine chains on the gamma-carboxyl group. Glycylation is mainly limited to tubulin incorporated into axonemes (cilia and flagella) whereas glutamylation is prevalent in neuronal cells, centrioles, axonemes, and the mitotic spindle. Both modifications can coexist on the same protein on adjacent residues, and lowering polyglycylation levels increases polyglutamylation, and reciprocally. The precise function of polyglycylation is still unclear. In terms of processing, some glutamate residues at the C-terminus are polyglutamylated, resulting in polyglutamate chains on the gamma-carboxyl group. Polyglutamylation plays a key role in microtubule severing by spastin (SPAST). SPAST preferentially recognizes and acts on microtubules decorated with short polyglutamate tails: severing activity by SPAST increases as the number of glutamates per tubulin rises from one to eight, but decreases beyond this glutamylation threshold.

The protein resides in the cytoplasm. It localises to the cytoskeleton. The catalysed reaction is GTP + H2O = GDP + phosphate + H(+). Its function is as follows. Tubulin is the major constituent of microtubules, a cylinder consisting of laterally associated linear protofilaments composed of alpha- and beta-tubulin heterodimers. Microtubules grow by the addition of GTP-tubulin dimers to the microtubule end, where a stabilizing cap forms. Below the cap, tubulin dimers are in GDP-bound state, owing to GTPase activity of alpha-tubulin. The polypeptide is Tubulin alpha-8 chain (Gallus gallus (Chicken)).